A 283-amino-acid chain; its full sequence is NADH-ubiquinone oxidoreductase 30.4 kDa subunit, mitochondrial (283 aa).

Residues 1–17 (MASKLCRSRALASALRS) constitute a mitochondrion transit peptide. A disordered region spans residues 258–283 (GAGIDRKPESFKLPTPKPETKPEEKK).

Belongs to the complex I 30 kDa subunit family. Complex I is composed of about 40 different subunits. This is a component of the iron-sulfur protein fraction.

It is found in the mitochondrion inner membrane. It catalyses the reaction a ubiquinone + NADH + 5 H(+)(in) = a ubiquinol + NAD(+) + 4 H(+)(out). Its function is as follows. Core subunit of the mitochondrial membrane respiratory chain NADH dehydrogenase (Complex I) that is believed to belong to the minimal assembly required for catalysis. Complex I functions in the transfer of electrons from NADH to the respiratory chain. The immediate electron acceptor for the enzyme is believed to be ubiquinone. In Neurospora crassa (strain ATCC 24698 / 74-OR23-1A / CBS 708.71 / DSM 1257 / FGSC 987), this protein is NADH-ubiquinone oxidoreductase 30.4 kDa subunit, mitochondrial (nuo-31).